We begin with the raw amino-acid sequence, 264 residues long: MYIVTTSFCKIQLQMFTIVSDAAETIKKLFVVFNDLVDIANLSFTNEGLSVQSMDTSHVSLVNLKIGKSYFKDYSIAQEATVGIKISNFVRILDCVGNDEITISFTYDNPDELIVKSEYSDFKMKTIDIETEEMEIPEMDIDVLIDADSNIIQKYLKNMAGFGDTVKIYTQDDVVHMKTAGEIGEVDLQIHDQRVEIKGRLTCEFATRYLMTFAKAAGISKRVVIKLLDDQPGIFEYVFDAESDSKISFFLAPKVKDDGDDEEY.

A DNA-binding region spans residues 75–94 (SIAQEATVGIKISNFVRILD).

Belongs to the PCNA family.

Functionally, sliding clamp subunit. Responsible for tethering the catalytic subunit of DNA polymerase to DNA during high-speed replication. This chain is Probable DNA polymerase sliding clamp 2, found in Paramecium bursaria Chlorella virus 1 (PBCV-1).